We begin with the raw amino-acid sequence, 995 residues long: Beta-agarase A (995 aa).

A signal peptide spans 1-20 (MKIKFLSAAIAASLALPLSA). Residues 936 to 972 (GTNIGVSHSGPEAPDPGEPVDPPIDPPTPPTGGVTGG) are disordered. Over residues 948–965 (APDPGEPVDPPIDPPTPP) the composition is skewed to pro residues.

It belongs to the glycosyl hydrolase 50 family.

The catalysed reaction is Hydrolysis of (1-&gt;4)-beta-D-galactosidic linkages in agarose, giving the tetramer as the predominant product.. Its function is as follows. Hydrolyzes agarose and also neoagarotetraose to yield neoagarobiose. This Vibrio sp. (strain JT0107) protein is Beta-agarase A (agaA).